The following is a 287-amino-acid chain: uncharacterized protein (287 aa).

It belongs to the A.longa ORF167/ORF288 family.

The protein localises to the plastid. This is an uncharacterized protein from Euglena longa (Euglenophycean alga).